The sequence spans 289 residues: ATP synthase gamma chain (289 aa).

This sequence belongs to the ATPase gamma chain family. F-type ATPases have 2 components, CF(1) - the catalytic core - and CF(0) - the membrane proton channel. CF(1) has five subunits: alpha(3), beta(3), gamma(1), delta(1), epsilon(1). CF(0) has three main subunits: a, b and c.

The protein localises to the cell membrane. Produces ATP from ADP in the presence of a proton gradient across the membrane. The gamma chain is believed to be important in regulating ATPase activity and the flow of protons through the CF(0) complex. The polypeptide is ATP synthase gamma chain (Buchnera aphidicola subsp. Melaphis rhois).